The sequence spans 229 residues: MSAEGHKLRGSCHACAASKVRCSKEKPTCSRCSKRGTTCEYLITKRPGRKQLNNRSTAKESSNTTRTSLATVPQGLLEPDPMSTAIPLADQPPWSPPGTTPSSLDVFSSLFDSAEGSWSLPLADWDNEVDEYLTHLAMPRTANSEPLDAEGGITSSHNTSSNSPARPPTLQPVCPQLTCVAQSTFPAPGQCRGTSPTLVLYLSQQCAGSVEAADHQRSAGRLHIRRPAR.

The segment at residues 12–39 (CHACAASKVRCSKEKPTCSRCSKRGTTC) is a DNA-binding region (zn(2)-C6 fungal-type). Disordered regions lie at residues 50–100 (KQLN…PGTT) and 141–169 (TANS…RPPT). Polar residues-rich tracts occupy residues 51–71 (QLNN…SLAT) and 153–164 (ITSSHNTSSNSP).

It is found in the nucleus. Its function is as follows. Transcription factor that regulates the expression of the gene cluster that mediates the biosynthesis of geodin, an intermediate in the biosynthesis of other natural products. The polypeptide is Geodin cluster transcription factor (Aspergillus terreus (strain NIH 2624 / FGSC A1156)).